The primary structure comprises 594 residues: UvrABC system protein C (594 aa).

Residues Asp14–Ile91 form the GIY-YIG domain. Residues Lys196–Ile231 enclose the UVR domain.

It belongs to the UvrC family. Interacts with UvrB in an incision complex.

It localises to the cytoplasm. Functionally, the UvrABC repair system catalyzes the recognition and processing of DNA lesions. UvrC both incises the 5' and 3' sides of the lesion. The N-terminal half is responsible for the 3' incision and the C-terminal half is responsible for the 5' incision. The polypeptide is UvrABC system protein C (Bacillus anthracis (strain A0248)).